Here is a 131-residue protein sequence, read N- to C-terminus: Histone H2A.2 (131 aa).

The disordered stretch occupies residues 1–22; it reads MSGGKGKAGSSEKASTSRSAKA. N-acetylserine is present on S2. An N6-acetyllysine mark is found at K5 and K7. At Q105 the chain carries N5-methylglutamine. A Phosphoserine modification is found at S128. The short motif at 128–129 is the [ST]-Q motif element; that stretch reads SQ.

The protein belongs to the histone H2A family. The nucleosome is a histone octamer containing two molecules each of H2A, H2B, H3 and H4 assembled in one H3-H4 heterotetramer and two H2A-H2B heterodimers. The octamer wraps approximately 147 bp of DNA. In terms of processing, phosphorylated to form H2AS128ph (gamma-H2A) in response to DNA double-strand breaks (DSBs) generated by exogenous genotoxic agents and by stalled replication forks. Phosphorylation is dependent on the DNA damage checkpoint kinases MEC1/ATR and TEL1/ATM, spreads on either side of a detected DSB site and may mark the surrounding chromatin for recruitment of proteins required for DNA damage signaling and repair. Gamma-H2A is removed from the DNA prior to the strand invasion-primer extension step of the repair process and subsequently dephosphorylated. Dephosphorylation is necessary for efficient recovery from the DNA damage checkpoint. Post-translationally, acetylated by ESA1 to form H2AK4ac and H2AK7ac.

Its subcellular location is the nucleus. It is found in the chromosome. Its function is as follows. Core component of nucleosome which plays a central role in DNA double strand break (DSB) repair. Nucleosomes wrap and compact DNA into chromatin, limiting DNA accessibility to the cellular machineries which require DNA as a template. Histones thereby play a central role in transcription regulation, DNA repair, DNA replication and chromosomal stability. DNA accessibility is regulated via a complex set of post-translational modifications of histones, also called histone code, and nucleosome remodeling. In Candida albicans (strain SC5314 / ATCC MYA-2876) (Yeast), this protein is Histone H2A.2 (HTA2).